A 527-amino-acid chain; its full sequence is MSMQTEQELVALCLALIKDQDSLSAAEKKLTKTTPVSALKPREIDTIRKRSRAGLTHSANVLFDPLGHRAPRAGAVYTPAPIVRSMMTWLAAQGSPARIVDPGAGSGRFILAAGEAFPDAQLVAVEMDPLAALMLRANLSARGWTDRATVMVKDYREVKLPPCAGITAFIGNPPYVRHHDIGEDWKAWYASNFAGYGIKASALAGLHLHFFLQTRLLAKAGDVGAFITSAEWMDVNYGSALRRLLLDELGGIALHVLEPTVEAFPGTATTAAIACFRVGETARPVRVRFIDELTNLNGLTKGTDIPREQLQAASRWSIIVRPSAPAMAGDIELGELFRVHRGQVTGANGIWIAGEHAQGLPDRVKMPAVTKAKDLIQAGAHLNSAEVLRRVIDLPTDLDDFTKEERRRISSFLSWAKLHGADQSYIAQHRRAWWSVGLKAPAPILCTYMARRPPQFTLNACDARHINIAHGLYPREPLAAGIMASLVTWLNKNINTGSGRTYAGGLTKFEPKEIERLRIPSLENLHA.

It belongs to the N(4)/N(6)-methyltransferase family.

The enzyme catalyses a 2'-deoxyadenosine in DNA + S-adenosyl-L-methionine = an N(6)-methyl-2'-deoxyadenosine in DNA + S-adenosyl-L-homocysteine + H(+). A gamma subtype methylase that recognizes the double-stranded sequence 5'-GTCGAC-3', possibly methylates A-5 on both strands, and protects the DNA from cleavage by the XamI endonuclease. The protein is Type II methyltransferase M.XamI of Xanthomonas campestris pv. amaranthicola.